Reading from the N-terminus, the 292-residue chain is 33 kDa chaperonin (292 aa).

2 disulfide bridges follow: Cys-230–Cys-232 and Cys-263–Cys-266.

This sequence belongs to the HSP33 family. Under oxidizing conditions two disulfide bonds are formed involving the reactive cysteines. Under reducing conditions zinc is bound to the reactive cysteines and the protein is inactive.

The protein resides in the cytoplasm. Redox regulated molecular chaperone. Protects both thermally unfolding and oxidatively damaged proteins from irreversible aggregation. Plays an important role in the bacterial defense system toward oxidative stress. This Cronobacter sakazakii (strain ATCC BAA-894) (Enterobacter sakazakii) protein is 33 kDa chaperonin.